We begin with the raw amino-acid sequence, 130 residues long: Ribosome-binding factor A (130 aa).

Belongs to the RbfA family. As to quaternary structure, monomer. Binds 30S ribosomal subunits, but not 50S ribosomal subunits or 70S ribosomes.

It localises to the cytoplasm. In terms of biological role, one of several proteins that assist in the late maturation steps of the functional core of the 30S ribosomal subunit. Associates with free 30S ribosomal subunits (but not with 30S subunits that are part of 70S ribosomes or polysomes). Required for efficient processing of 16S rRNA. May interact with the 5'-terminal helix region of 16S rRNA. In Pseudomonas aeruginosa (strain LESB58), this protein is Ribosome-binding factor A.